A 343-amino-acid chain; its full sequence is Holliday junction branch migration complex subunit RuvB (343 aa).

Residues 1-182 form a large ATPase domain (RuvB-L) region; it reads MTDPIPLHTP…FGIPVRLNFY (182 aa). ATP-binding residues include Leu-21, Arg-22, Gly-63, Lys-66, Thr-67, Thr-68, Arg-172, Tyr-182, and Arg-219. A Mg(2+)-binding site is contributed by Thr-67. The segment at 183–253 is small ATPAse domain (RuvB-S); it reads TEEELEKVVT…IADAALTRLE (71 aa). The interval 256–343 is head domain (RuvB-H); the sequence is GLGLDAMDRR…SQTGLFDGKS (88 aa). Residues Arg-292, Arg-311, and Arg-316 each coordinate DNA.

This sequence belongs to the RuvB family. Homohexamer. Forms an RuvA(8)-RuvB(12)-Holliday junction (HJ) complex. HJ DNA is sandwiched between 2 RuvA tetramers; dsDNA enters through RuvA and exits via RuvB. An RuvB hexamer assembles on each DNA strand where it exits the tetramer. Each RuvB hexamer is contacted by two RuvA subunits (via domain III) on 2 adjacent RuvB subunits; this complex drives branch migration. In the full resolvosome a probable DNA-RuvA(4)-RuvB(12)-RuvC(2) complex forms which resolves the HJ.

The protein localises to the cytoplasm. The catalysed reaction is ATP + H2O = ADP + phosphate + H(+). Its function is as follows. The RuvA-RuvB-RuvC complex processes Holliday junction (HJ) DNA during genetic recombination and DNA repair, while the RuvA-RuvB complex plays an important role in the rescue of blocked DNA replication forks via replication fork reversal (RFR). RuvA specifically binds to HJ cruciform DNA, conferring on it an open structure. The RuvB hexamer acts as an ATP-dependent pump, pulling dsDNA into and through the RuvAB complex. RuvB forms 2 homohexamers on either side of HJ DNA bound by 1 or 2 RuvA tetramers; 4 subunits per hexamer contact DNA at a time. Coordinated motions by a converter formed by DNA-disengaged RuvB subunits stimulates ATP hydrolysis and nucleotide exchange. Immobilization of the converter enables RuvB to convert the ATP-contained energy into a lever motion, pulling 2 nucleotides of DNA out of the RuvA tetramer per ATP hydrolyzed, thus driving DNA branch migration. The RuvB motors rotate together with the DNA substrate, which together with the progressing nucleotide cycle form the mechanistic basis for DNA recombination by continuous HJ branch migration. Branch migration allows RuvC to scan DNA until it finds its consensus sequence, where it cleaves and resolves cruciform DNA. The protein is Holliday junction branch migration complex subunit RuvB of Erythrobacter litoralis (strain HTCC2594).